We begin with the raw amino-acid sequence, 622 residues long: Low affinity potassium transport system protein Kup (622 aa).

12 helical membrane-spanning segments follow: residues 9 to 29 (LSAV…TSPL), 46 to 66 (PDVV…VVSV), 101 to 121 (ILVV…VITP), 137 to 157 (PALD…LFVI), 165 to 185 (VGKL…LLGL), 213 to 233 (VSFF…ALYA), 247 to 267 (WFTV…ALLL), 276 to 296 (PFFL…ATLA), 337 to 357 (IYIP…IIGF), 363 to 383 (LAAA…ILFC), 395 to 415 (FLVV…FSAN), and 416 to 436 (VLKL…MFII).

This sequence belongs to the HAK/KUP transporter (TC 2.A.72) family.

It localises to the cell inner membrane. The enzyme catalyses K(+)(in) + H(+)(in) = K(+)(out) + H(+)(out). In terms of biological role, responsible for the low-affinity transport of potassium into the cell. Likely operates as a K(+):H(+) symporter. The sequence is that of Low affinity potassium transport system protein Kup from Yersinia pestis (strain Pestoides F).